The sequence spans 47 residues: Delta-ctenitoxin-Pr2d (47 aa).

Cystine bridges form between Cys-3/Cys-17, Cys-10/Cys-23, Cys-14/Cys-46, Cys-16/Cys-31, and Cys-25/Cys-29.

Expressed by the venom gland.

The protein resides in the secreted. Functionally, blocks voltage-gated sodium channels (Nav). Causes rapid general spastic paralysis and death when injected in mice at dose levels of less than 2 ug per mouse. This chain is Delta-ctenitoxin-Pr2d, found in Phoneutria reidyi (Brazilian Amazonian armed spider).